A 163-amino-acid polypeptide reads, in one-letter code: Nucleotide-binding protein Dvul_1191 (163 aa).

This sequence belongs to the YajQ family.

Functionally, nucleotide-binding protein. This Nitratidesulfovibrio vulgaris (strain DP4) (Desulfovibrio vulgaris) protein is Nucleotide-binding protein Dvul_1191.